A 463-amino-acid chain; its full sequence is Glutamyl-tRNA(Gln) amidotransferase subunit A, mitochondrial (463 aa).

Residues K47 and S124 each act as charge relay system in the active site. The active-site Acyl-ester intermediate is the S148.

This sequence belongs to the amidase family. GatA subfamily. Subunit of the heterotrimeric GatFAB amidotransferase (AdT) complex, composed of A, B and F subunits.

The protein resides in the mitochondrion. It catalyses the reaction L-glutamyl-tRNA(Gln) + L-glutamine + ATP + H2O = L-glutaminyl-tRNA(Gln) + L-glutamate + ADP + phosphate + H(+). Allows the formation of correctly charged Gln-tRNA(Gln) through the transamidation of misacylated Glu-tRNA(Gln) in the mitochondria. The reaction takes place in the presence of glutamine and ATP through an activated gamma-phospho-Glu-tRNA(Gln). The protein is Glutamyl-tRNA(Gln) amidotransferase subunit A, mitochondrial of Eremothecium gossypii (strain ATCC 10895 / CBS 109.51 / FGSC 9923 / NRRL Y-1056) (Yeast).